A 396-amino-acid polypeptide reads, in one-letter code: Ribosomal RNA large subunit methyltransferase I (396 aa).

Residues 2–81 (TVSIYLAKGR…EAIDKDFFVR (80 aa)) form the PUA domain.

This sequence belongs to the methyltransferase superfamily. RlmI family.

It localises to the cytoplasm. It catalyses the reaction cytidine(1962) in 23S rRNA + S-adenosyl-L-methionine = 5-methylcytidine(1962) in 23S rRNA + S-adenosyl-L-homocysteine + H(+). Specifically methylates the cytosine at position 1962 (m5C1962) of 23S rRNA. This Aliivibrio fischeri (strain ATCC 700601 / ES114) (Vibrio fischeri) protein is Ribosomal RNA large subunit methyltransferase I.